The following is a 255-amino-acid chain: 5'-nucleotidase SurE (255 aa).

Asp8, Asp9, Ser39, and Asn91 together coordinate a divalent metal cation.

The protein belongs to the SurE nucleotidase family. Requires a divalent metal cation as cofactor.

Its subcellular location is the cytoplasm. The catalysed reaction is a ribonucleoside 5'-phosphate + H2O = a ribonucleoside + phosphate. Functionally, nucleotidase that shows phosphatase activity on nucleoside 5'-monophosphates. This chain is 5'-nucleotidase SurE, found in Acinetobacter baumannii (strain AB0057).